Here is a 358-residue protein sequence, read N- to C-terminus: U5 small nuclear ribonucleoprotein 40 kDa protein (358 aa).

Lys18 is covalently cross-linked (Glycyl lysine isopeptide (Lys-Gly) (interchain with G-Cter in SUMO2)). Arg21 carries the asymmetric dimethylarginine modification. 7 WD repeats span residues 65–104, 108–147, 150–190, 192–231, 234–273, 284–323, and 326–358; these read GHEG…DNYA, GHSG…RVKR, GHTS…AIQT, QNTY…LTYT, GHAD…PKER, NFEK…ILYK, and GHAG…GEIQ. A Glycyl lysine isopeptide (Lys-Gly) (interchain with G-Cter in SUMO2) cross-link involves residue Lys271.

As to quaternary structure, component of the pre-catalytic and catalytic spliceosome complexes. Component of the postcatalytic spliceosome P complex. Part of the U5 snRNP complex. Interacts with PRPF8. Component of the U4/U6-U5 tri-snRNP complex composed of the U4, U6 and U5 snRNAs and at least PRPF3, PRPF4, PRPF6, PRPF8, PRPF31, SNRNP200, TXNL4A, WDR57, SNRNP40, DDX23, CD2BP2, PPIH, SNU13, EFTUD2, SART1 and USP39. Component of the minor spliceosome, which splices U12-type introns.

Its subcellular location is the nucleus. Functionally, required for pre-mRNA splicing as component of the activated spliceosome. Component of the U5 small nuclear ribonucleoprotein (snRNP) complex and the U4/U6-U5 tri-snRNP complex, building blocks of the spliceosome. As a component of the minor spliceosome, involved in the splicing of U12-type introns in pre-mRNAs. The polypeptide is U5 small nuclear ribonucleoprotein 40 kDa protein (SNRNP40) (Bos taurus (Bovine)).